We begin with the raw amino-acid sequence, 344 residues long: GTP 3',8-cyclase (344 aa).

The region spanning Pro19–Asp239 is the Radical SAM core domain. Arg28 serves as a coordination point for GTP. Positions 35 and 39 each coordinate [4Fe-4S] cluster. Tyr41 provides a ligand contact to S-adenosyl-L-methionine. Residue Cys42 coordinates [4Fe-4S] cluster. Arg77 lines the GTP pocket. Gly81 lines the S-adenosyl-L-methionine pocket. Thr111 lines the GTP pocket. Ser135 is an S-adenosyl-L-methionine binding site. Residue Lys171 participates in GTP binding. Met205 serves as a coordination point for S-adenosyl-L-methionine. Cys268 and Cys271 together coordinate [4Fe-4S] cluster. Arg273–Arg275 provides a ligand contact to GTP. Residue Cys285 participates in [4Fe-4S] cluster binding.

This sequence belongs to the radical SAM superfamily. MoaA family. As to quaternary structure, monomer and homodimer. [4Fe-4S] cluster is required as a cofactor.

It carries out the reaction GTP + AH2 + S-adenosyl-L-methionine = (8S)-3',8-cyclo-7,8-dihydroguanosine 5'-triphosphate + 5'-deoxyadenosine + L-methionine + A + H(+). The protein operates within cofactor biosynthesis; molybdopterin biosynthesis. Functionally, catalyzes the cyclization of GTP to (8S)-3',8-cyclo-7,8-dihydroguanosine 5'-triphosphate. In Rhodopseudomonas palustris (strain TIE-1), this protein is GTP 3',8-cyclase.